The following is a 370-amino-acid chain: 3-isopropylmalate dehydrogenase (370 aa).

77-90 (GPKWDSVPYEVRPE) provides a ligand contact to NAD(+). Substrate contacts are provided by arginine 97, arginine 107, arginine 135, and aspartate 226. Positions 226, 250, and 254 each coordinate Mg(2+). Residue 290-302 (GSAPDIAGKGIAN) coordinates NAD(+).

It belongs to the isocitrate and isopropylmalate dehydrogenases family. LeuB type 1 subfamily. Homodimer. Requires Mg(2+) as cofactor. Mn(2+) serves as cofactor.

The protein localises to the cytoplasm. The catalysed reaction is (2R,3S)-3-isopropylmalate + NAD(+) = 4-methyl-2-oxopentanoate + CO2 + NADH. It participates in amino-acid biosynthesis; L-leucine biosynthesis; L-leucine from 3-methyl-2-oxobutanoate: step 3/4. Its function is as follows. Catalyzes the oxidation of 3-carboxy-2-hydroxy-4-methylpentanoate (3-isopropylmalate) to 3-carboxy-4-methyl-2-oxopentanoate. The product decarboxylates to 4-methyl-2 oxopentanoate. In Brucella abortus (strain 2308), this protein is 3-isopropylmalate dehydrogenase.